The chain runs to 170 residues: Transmembrane protein 252 (170 aa).

A run of 2 helical transmembrane segments spans residues 8-28 (ILCA…AFFI) and 40-60 (LIAA…GIFW). The disordered stretch occupies residues 112–147 (CPAEREASGIPPPLYTETGLEFQDGNDSHPEAPPSY).

The protein localises to the membrane. This Pongo abelii (Sumatran orangutan) protein is Transmembrane protein 252 (TMEM252).